Here is a 319-residue protein sequence, read N- to C-terminus: tRNA uridine(34) hydroxylase (319 aa).

The region spanning 124–218 is the Rhodanese domain; that stretch reads LDEDTVILDA…YGKNEETKGE (95 aa). C178 (cysteine persulfide intermediate) is an active-site residue.

Belongs to the TrhO family.

The enzyme catalyses uridine(34) in tRNA + AH2 + O2 = 5-hydroxyuridine(34) in tRNA + A + H2O. Functionally, catalyzes oxygen-dependent 5-hydroxyuridine (ho5U) modification at position 34 in tRNAs. The polypeptide is tRNA uridine(34) hydroxylase (Listeria welshimeri serovar 6b (strain ATCC 35897 / DSM 20650 / CCUG 15529 / CIP 8149 / NCTC 11857 / SLCC 5334 / V8)).